The primary structure comprises 333 residues: Phospholipid phosphatase-related protein type 1 (333 aa).

3 helical membrane passes run 12 to 32 (IIPC…LLAY), 66 to 86 (FIQP…IIFV), and 126 to 146 (FIGV…AGQV). N-linked (GlcNAc...) asparagine glycosylation is present at asparagine 162. Helical transmembrane passes span 200–217 (ASLS…ITST), 223–243 (SRLA…LTGL), and 256–276 (VVAG…CVVN).

Belongs to the PA-phosphatase related phosphoesterase family.

It localises to the cell membrane. The protein resides in the cell projection. The protein localises to the neuron projection. Functionally, may play a role in neurite outgrowth and neurogenesis. This is Phospholipid phosphatase-related protein type 1 (plppr1) from Danio rerio (Zebrafish).